The primary structure comprises 354 residues: Replication factor C subunit 5 (354 aa).

Position 40–47 (40–47 (YGPSGSGK)) interacts with ATP.

This sequence belongs to the activator 1 small subunits family. Heterotetramer of subunits RFC2, RFC3, RFC4 and RFC5 that can form a complex with RFC1. Expressed in roots, leaves, shoot apical meristem (SAM), flag leaves and panicles.

The protein localises to the nucleus. Its function is as follows. May be involved in DNA replication and thus regulate cell proliferation. This Oryza sativa subsp. japonica (Rice) protein is Replication factor C subunit 5 (RFC5).